A 418-amino-acid polypeptide reads, in one-letter code: PP2A regulatory subunit TAP46 (418 aa).

The segment at 367–418 (KMIQESNSAWHKDGSRSAQEDEDAEEEKARAWDDWKDDNPRGAGNKKLTPCG) is disordered. 2 stretches are compositionally biased toward basic and acidic residues: residues 376 to 385 (WHKDGSRSAQ) and 393 to 406 (EKAR…DDNP).

Belongs to the IGBP1/TAP42 family.

Involved in the regulation of the TOR signaling pathway. Seems to act as a regulator of PP2A catalytic activity. This Oryza sativa subsp. japonica (Rice) protein is PP2A regulatory subunit TAP46.